The chain runs to 576 residues: 2-isopropylmalate synthase (576 aa).

The 275-residue stretch at P31–N305 folds into the Pyruvate carboxyltransferase domain. Mg(2+) is bound by residues D40, H244, H246, and N280. The interval A437–A576 is regulatory domain.

It belongs to the alpha-IPM synthase/homocitrate synthase family. LeuA type 2 subfamily. As to quaternary structure, homodimer. It depends on Mg(2+) as a cofactor.

It is found in the cytoplasm. The enzyme catalyses 3-methyl-2-oxobutanoate + acetyl-CoA + H2O = (2S)-2-isopropylmalate + CoA + H(+). It participates in amino-acid biosynthesis; L-leucine biosynthesis; L-leucine from 3-methyl-2-oxobutanoate: step 1/4. Catalyzes the condensation of the acetyl group of acetyl-CoA with 3-methyl-2-oxobutanoate (2-ketoisovalerate) to form 3-carboxy-3-hydroxy-4-methylpentanoate (2-isopropylmalate). This chain is 2-isopropylmalate synthase, found in Ralstonia nicotianae (strain ATCC BAA-1114 / GMI1000) (Ralstonia solanacearum).